A 513-amino-acid chain; its full sequence is Bone morphogenetic protein 6 (513 aa).

A signal peptide spans 1-20 (MPGLGRRAQWLCWWWGLLCS). The propeptide occupies 21 to 374 (CCGPPPLRPP…VSEVHVRTTR (354 aa)). Disordered regions lie at residues 38–66 (AAGG…SSGF), 89–131 (LPHR…RLKS), and 145–200 (ADND…ASPL). A compositionally biased stretch (low complexity) spans 98-121 (GLQQPQPPALRQQEEQQQQQQLPR). Residues 158–172 (QQSWPHEAASSSQRR) are compositionally biased toward polar residues. N-linked (GlcNAc...) asparagine glycans are attached at residues Asn241, Asn269, Asn386, Asn404, and Asn454. The tract at residues 373–398 (TRSASSRRRQQSRNRSTQSQDVARVS) is disordered. Cystine bridges form between Cys412–Cys478, Cys441–Cys510, and Cys445–Cys512.

This sequence belongs to the TGF-beta family. In terms of assembly, interacts with SOSTDC1. Interacts (when glycosylated) with type I receptor ACVR1; the interaction may induce HAMP expression. Interacts with type II receptor ACVR2B. Interacts with Hemojuvelin/HJV. Interacts with ERFE; the interaction inhibits BMP-induced transcription of HAMP. Interacts with BMPR1A/ALK3. Forms heterodimers with BMP2 in vitro; the heterodimer then binds to its receptor BMPR1A /ALK3 and may induce HAMP expression. In terms of processing, glycosylated at Asn-454. Glycosylation is crucial for recognition by the activin receptor type I/ACVR1.

The protein resides in the secreted. In terms of biological role, growth factor of the TGF-beta superfamily that plays essential roles in many developmental processes including cartilage and bone formation. Also plays an important role in the regulation of HAMP/hepcidin expression and iron metabolism by acting as a ligand for hemojuvelin/HJV. Also acts to promote expression of HAMP, potentially via the interaction with its receptor BMPR1A/ALK3. Initiates the canonical BMP signaling cascade by associating with type I receptor ACVR1 and type II receptor ACVR2B. In turn, ACVR1 propagates signal by phosphorylating SMAD1/5/8 that travel to the nucleus and act as activators and repressors of transcription of target. Can also signal through non-canonical pathway such as TAZ-Hippo signaling cascade to modulate VEGF signaling by regulating VEGFR2 expression. In Homo sapiens (Human), this protein is Bone morphogenetic protein 6 (BMP6).